A 317-amino-acid polypeptide reads, in one-letter code: N-acetyl-gamma-glutamyl-phosphate reductase (317 aa).

Cysteine 136 is an active-site residue.

This sequence belongs to the NAGSA dehydrogenase family. Type 1 subfamily.

It is found in the cytoplasm. The enzyme catalyses N-acetyl-L-glutamate 5-semialdehyde + phosphate + NADP(+) = N-acetyl-L-glutamyl 5-phosphate + NADPH + H(+). Its pathway is amino-acid biosynthesis; L-arginine biosynthesis; N(2)-acetyl-L-ornithine from L-glutamate: step 3/4. Its function is as follows. Catalyzes the NADPH-dependent reduction of N-acetyl-5-glutamyl phosphate to yield N-acetyl-L-glutamate 5-semialdehyde. This is N-acetyl-gamma-glutamyl-phosphate reductase from Stenotrophomonas maltophilia (strain R551-3).